The chain runs to 623 residues: Zinc finger protein 143 (623 aa).

C2H2-type zinc fingers lie at residues 230 to 254 (FRCE…ERSH), 260 to 284 (YICD…VRTH), 290 to 314 (YRCQ…TRTH), 320 to 344 (FKCP…IRTH), 350 to 374 (YYCA…MRIH), 380 to 404 (YVCT…HVVH), and 410 to 433 (YNCN…RTAH).

It belongs to the GLI C2H2-type zinc-finger protein family.

The protein localises to the nucleus. Its function is as follows. Transcriptional activator. Activates the gene for selenocysteine tRNA (tRNAsec). Binds to the activator element (AE) motif of the selenocysteine tRNA gene promoter. In Danio rerio (Zebrafish), this protein is Zinc finger protein 143 (znf143).